Reading from the N-terminus, the 298-residue chain is Oligodendrocyte transcription factor 2 (298 aa).

Residues 1–13 (MDSDASLVSSRPS) are compositionally biased toward polar residues. Disordered regions lie at residues 1–60 (MDSD…SAEL) and 79–102 (SSSS…MTEP). The span at 26–41 (NKGGGGGGGGGGGFTG) shows a compositional bias: gly residues. A compositionally biased stretch (low complexity) spans 79 to 91 (SSSSSASSASSAS). The bHLH domain occupies 106-160 (QLRLKINSRERKRMHDLNIAMDGLREVMPYAHGPSVRKLSKIATLLLARNYILML).

The protein localises to the nucleus. Its function is as follows. Required for oligodendrocyte and motor neuron specification in the spinal cord. The chain is Oligodendrocyte transcription factor 2 (OLIG2) from Gallus gallus (Chicken).